The sequence spans 309 residues: Ubiquitin-conjugating enzyme E2 32 (309 aa).

A UBC core domain is found at 11–166 (PAVKRILQEV…ERQKIIDEIH (156 aa)). The Glycyl thioester intermediate role is filled by Cys93. The helical transmembrane segment at 275–295 (FTWAAVGLTIAIMVLLLKKFI) threads the bilayer.

The protein belongs to the ubiquitin-conjugating enzyme family.

It localises to the membrane. The catalysed reaction is S-ubiquitinyl-[E1 ubiquitin-activating enzyme]-L-cysteine + [E2 ubiquitin-conjugating enzyme]-L-cysteine = [E1 ubiquitin-activating enzyme]-L-cysteine + S-ubiquitinyl-[E2 ubiquitin-conjugating enzyme]-L-cysteine.. It functions in the pathway protein modification; protein ubiquitination. In terms of biological role, accepts the ubiquitin from the E1 complex and catalyzes its covalent attachment to other proteins. This Arabidopsis thaliana (Mouse-ear cress) protein is Ubiquitin-conjugating enzyme E2 32 (UBC32).